We begin with the raw amino-acid sequence, 203 residues long: Glycerol-3-phosphate acyltransferase (203 aa).

4 helical membrane passes run 1–21 (MIQTAFTALLLLAIGYLLGAI), 84–104 (WLQVLTGLAALAGHIWPVWLG), 117–137 (IFLGLAWPVGLACFGLFMAVI), and 157–179 (LMLLSGSSSAYVVVSLVASLMVL).

It belongs to the PlsY family. As to quaternary structure, probably interacts with PlsX.

The protein localises to the cell inner membrane. The catalysed reaction is an acyl phosphate + sn-glycerol 3-phosphate = a 1-acyl-sn-glycero-3-phosphate + phosphate. Its pathway is lipid metabolism; phospholipid metabolism. Its function is as follows. Catalyzes the transfer of an acyl group from acyl-phosphate (acyl-PO(4)) to glycerol-3-phosphate (G3P) to form lysophosphatidic acid (LPA). This enzyme utilizes acyl-phosphate as fatty acyl donor, but not acyl-CoA or acyl-ACP. This Synechococcus sp. (strain CC9605) protein is Glycerol-3-phosphate acyltransferase.